The sequence spans 474 residues: Hepatocyte nuclear factor 4-alpha (474 aa).

Positions 57-132 (SALCAICGDR…AGMKKEAVQN (76 aa)) form a DNA-binding region, nuclear receptor. NR C4-type zinc fingers lie at residues 60–80 (CAICGDRATGKHYGASSCDGC) and 96–120 (CRFSRQCVVDKDKRNQCRYCRLKKC). Residues S142 and S143 each carry the phosphoserine; by PKA modification. Phosphotyrosine is present on Y144. The region spanning 147-377 (SSLPSINALL…NLLQEMLLGG (231 aa)) is the NR LBD domain. T166 carries the phosphothreonine modification. S167 is modified (phosphoserine). Glycyl lysine isopeptide (Lys-Gly) (interchain with G-Cter in ubiquitin) cross-links involve residues K234 and K307. S313 is modified (phosphoserine; by AMPK). Residues 368–376 (NLLQEMLLG) carry the 9aaTAD motif. The segment at 413 to 450 (SNGQMCEWPRPRGQAATPETPQPSPPSGSGSESYKLLP) is disordered. 2 positions are modified to phosphothreonine: T429 and T432. At S436 the chain carries Phosphoserine. Position 458 is an N6-acetyllysine (K458).

This sequence belongs to the nuclear hormone receptor family. NR2 subfamily. In terms of assembly, homodimerization is required for HNF4-alpha to bind to its recognition site. Interacts with CLOCK, BMAL1, CRY1, CRY2, PER1 and PER2. Interacts with NR0B2/SHP; the resulting heterodimer is transcriptionally inactive. Interacts with DDX3X; this interaction disrupts the interaction between HNF4 and NR0B2 that forms inactive heterodimers and enhances the formation of active HNF4 homodimers. Phosphorylation at Ser-313 by AMPK reduces the ability to form homodimers and bind DNA. Phosphorylated in the recognition sequence R-R-S-S near the DNA-binding domain; phosphorylation results in decrease in DNA-binding activity. Phosphorylation of HNF4 depends on the diet and is decreased by a carbohydrate-rich diet and is increased by fasting. Post-translationally, the N-terminus is blocked. In terms of processing, acetylation at Lys-458 lowers transcriptional activation by about two-fold. As to expression, liver, kidney and intestine.

It is found in the nucleus. Its function is as follows. Transcriptional regulator which controls the expression of hepatic genes during the transition of endodermal cells to hepatic progenitor cells, facilitating the recruitment of RNA pol II to the promoters of target genes. Activates the transcription of CYP2C38. Represses the CLOCK-BMAL1 transcriptional activity and is essential for circadian rhythm maintenance and period regulation in the liver and colon cells. The polypeptide is Hepatocyte nuclear factor 4-alpha (Hnf4a) (Rattus norvegicus (Rat)).